A 396-amino-acid chain; its full sequence is Cysteine desulfurase (396 aa).

Residues 71–72, Asn-148, Gln-176, and 196–198 each bind pyridoxal 5'-phosphate; these read GT and SGH. Position 199 is an N6-(pyridoxal phosphate)lysine (Lys-199). Thr-231 contributes to the pyridoxal 5'-phosphate binding site. The Cysteine persulfide intermediate role is filled by Cys-319. Cys-319 is a [2Fe-2S] cluster binding site.

The protein belongs to the class-V pyridoxal-phosphate-dependent aminotransferase family. NifS/IscS subfamily. As to quaternary structure, homodimer. The cofactor is pyridoxal 5'-phosphate.

The catalysed reaction is (sulfur carrier)-H + L-cysteine = (sulfur carrier)-SH + L-alanine. Its function is as follows. Catalyzes the removal of elemental sulfur atoms from cysteine to produce alanine. Seems to participate in the biosynthesis of the nitrogenase metalloclusters by providing the inorganic sulfur required for the Fe-S core formation. This is Cysteine desulfurase from Azotobacter chroococcum mcd 1.